Consider the following 327-residue polypeptide: tRNA dimethylallyltransferase (327 aa).

Residue 14-21 (GPTASGKT) coordinates ATP. 16 to 21 (TASGKT) is a substrate binding site. 2 interaction with substrate tRNA regions span residues 39–42 (DSAL) and 163–167 (QRIQR).

It belongs to the IPP transferase family. In terms of assembly, monomer. It depends on Mg(2+) as a cofactor.

The catalysed reaction is adenosine(37) in tRNA + dimethylallyl diphosphate = N(6)-dimethylallyladenosine(37) in tRNA + diphosphate. Functionally, catalyzes the transfer of a dimethylallyl group onto the adenine at position 37 in tRNAs that read codons beginning with uridine, leading to the formation of N6-(dimethylallyl)adenosine (i(6)A). This Xanthomonas oryzae pv. oryzae (strain MAFF 311018) protein is tRNA dimethylallyltransferase.